The following is a 262-amino-acid chain: Intron-encoded DNA endonuclease ai2b (262 aa).

This sequence belongs to the LAGLIDADG endonuclease family.

The protein resides in the mitochondrion. Mitochondrial DNA endonuclease involved in intron homing. This Dictyostelium discoideum (Social amoeba) protein is Intron-encoded DNA endonuclease ai2b (ai2b).